We begin with the raw amino-acid sequence, 401 residues long: uncharacterized protein (401 aa).

The next 7 helical transmembrane spans lie at 44 to 64 (LKYT…LVFI), 69 to 89 (LYSF…FVLL), 99 to 119 (LVFN…LIIF), 130 to 150 (ILST…SIIP), 201 to 221 (FIYA…LYIL), 246 to 266 (ILFY…SFVA), and 286 to 306 (LFFS…GTVV).

Its subcellular location is the cell membrane. This is an uncharacterized protein from Mycoplasma pneumoniae (strain ATCC 29342 / M129 / Subtype 1) (Mycoplasmoides pneumoniae).